The sequence spans 67 residues: MPKKLKIKLVKSPIGYSWDQKDTVKRLGLRKLNQIVVKDDLPQIRGMIRKVRHLVEVEEIEEGGSNA.

It belongs to the universal ribosomal protein uL30 family. As to quaternary structure, part of the 50S ribosomal subunit.

In Thermotoga petrophila (strain ATCC BAA-488 / DSM 13995 / JCM 10881 / RKU-1), this protein is Large ribosomal subunit protein uL30.